A 232-amino-acid polypeptide reads, in one-letter code: 2,3-bisphosphoglycerate-dependent phosphoglycerate mutase (232 aa).

Residues 10 to 17 (RHGESIWN), 23 to 24 (TG), R62, 89 to 92 (ERHY), K100, 116 to 117 (RR), and 185 to 186 (GN) contribute to the substrate site. The active-site Tele-phosphohistidine intermediate is the H11. E89 acts as the Proton donor/acceptor in catalysis.

The protein belongs to the phosphoglycerate mutase family. BPG-dependent PGAM subfamily. In terms of assembly, homodimer.

It catalyses the reaction (2R)-2-phosphoglycerate = (2R)-3-phosphoglycerate. Its pathway is carbohydrate degradation; glycolysis; pyruvate from D-glyceraldehyde 3-phosphate: step 3/5. Functionally, catalyzes the interconversion of 2-phosphoglycerate and 3-phosphoglycerate. The chain is 2,3-bisphosphoglycerate-dependent phosphoglycerate mutase from Buchnera aphidicola subsp. Baizongia pistaciae (strain Bp).